The primary structure comprises 736 residues: Serine/threonine-protein kinase BRSK2 (736 aa).

A Protein kinase domain is found at tyrosine 19 to tyrosine 270. ATP contacts are provided by residues leucine 25–valine 33 and lysine 48. Aspartate 141 (proton acceptor) is an active-site residue. Threonine 174 bears the Phosphothreonine; by LKB1 mark. Threonine 260 is modified (phosphothreonine; by PKA). Serine 294 is modified (phosphoserine). The region spanning aspartate 297–aspartate 339 is the UBA domain. The segment covering proline 345–aspartate 366 has biased composition (basic and acidic residues). Disordered stretches follow at residues proline 345 to tryptophan 475 and histidine 493 to serine 513. Phosphoserine is present on residues serine 367, serine 382, serine 393, serine 412, alanine 416, serine 423, and serine 427. The span at serine 410–proline 428 shows a compositional bias: low complexity. A compositionally biased stretch (pro residues) spans threonine 431–lysine 445. Serine 455 is subject to Phosphoserine. Phosphothreonine is present on residues threonine 459, threonine 463, and threonine 509. 3 positions are modified to phosphoserine: serine 512, serine 513, and serine 520. The KEN box signature appears at lysine 603 to asparagine 605. A disordered region spans residues lysine 681–proline 736. Low complexity predominate over residues glycine 699–glycine 708.

This sequence belongs to the protein kinase superfamily. CAMK Ser/Thr protein kinase family. SNF1 subfamily. As to quaternary structure, interacts with FZR1, a regulatory subunit of the APC ubiquitin ligase complex. Interacts with COPS5. Interacts with PAK1. The cofactor is Mg(2+). Phosphorylated at Thr-174 by STK11/LKB1 in complex with STE20-related adapter-alpha (STRADA) pseudo kinase and CAB39. Not phosphorylated at Thr-174 by CaMKK2. In contrast, it is phosphorylated and activated by CaMKK1. May be inactivated via dephosphorylation of Thr-174 by PP2C. Phosphorylated at Thr-260 by PKA. Phosphorylation at Thr-260 by PKA was not observed in another study, but this may reflect differences in the experimental approach. Phosphorylation at Thr-260 seems to play a role in the regulation of insulin secretion. In terms of processing, polyubiquitinated by the APC complex in conjunction with FZR1, leading to its proteasomal degradation. Targeted for proteasomal degradation by interaction with COPS5. BRSK2 levels change during the cell cycle. BRSK2 levels are low at the G1/S boundary and gradually increase as cells progress into G2 phase. BRSK2 levels decrease rapidly at the end of mitosis. Detected in pancreas islets (at protein level).

It is found in the cytoplasm. The protein resides in the cytoskeleton. It localises to the microtubule organizing center. The protein localises to the centrosome. Its subcellular location is the perinuclear region. It is found in the endoplasmic reticulum. The catalysed reaction is L-seryl-[protein] + ATP = O-phospho-L-seryl-[protein] + ADP + H(+). It catalyses the reaction L-threonyl-[protein] + ATP = O-phospho-L-threonyl-[protein] + ADP + H(+). The enzyme catalyses L-seryl-[tau protein] + ATP = O-phospho-L-seryl-[tau protein] + ADP + H(+). It carries out the reaction L-threonyl-[tau protein] + ATP = O-phospho-L-threonyl-[tau protein] + ADP + H(+). Activated by phosphorylation on Thr-174 by STK11/LKB1. Functionally, serine/threonine-protein kinase that plays a key role in polarization of neurons and axonogenesis, cell cycle progress and insulin secretion. Phosphorylates CDK16, CDC25C, MAPT/TAU, PAK1 and WEE1. Following phosphorylation and activation by STK11/LKB1, acts as a key regulator of polarization of cortical neurons, probably by mediating phosphorylation of microtubule-associated proteins such as MAPT/TAU at 'Thr-529' and 'Ser-579'. Also regulates neuron polarization by mediating phosphorylation of WEE1 at 'Ser-642' in postmitotic neurons, leading to down-regulate WEE1 activity in polarized neurons. Plays a role in the regulation of the mitotic cell cycle progress and the onset of mitosis. Plays a role in the regulation of insulin secretion in response to elevated glucose levels, probably via phosphorylation of CDK16 and PAK1. While BRSK2 phosphorylated at Thr-174 can inhibit insulin secretion, BRSK2 phosphorylated at Thr-260 can promote insulin secretion. Regulates reorganization of the actin cytoskeleton. May play a role in the apoptotic response triggered by endoplasmic reticulum (ER) stress. In Homo sapiens (Human), this protein is Serine/threonine-protein kinase BRSK2 (BRSK2).